We begin with the raw amino-acid sequence, 297 residues long: MGTALDIKIKRANKVYHAGEVLSGVVVISSKDSVQHQGVSLTMEGTVNLQLSAKSVGVFEAFYNSVKPIQIINSTIEMVKPGKFPSGKTEIPFEFPLHLKGNKVLYETYHGVFVNIQYTLRCDMKRSLLAKDLTKTCEFIVHSAPQKGKFTPSPVDFTITPETLQNVKERALLPKFLLRGHLNSTNCVITQPLTGELVVESSEAAIRSVELQLVRVETCGCAEGYARDATEIQNIQIADGDVCRGLSVPIYMVFPRLFTCPTLETTNFKVEFEVNIVVLLHPDHLITENFPLKLCRI.

It belongs to the VPS26 family. Component of the commander complex that is essential for endosomal recycling of transmembrane cargos; the commander complex is composed of the CCC subcomplex and the retriever subcomplex. Component of the heterotrimeric retriever complex consisting of VPS26C, VPS29 and VPS35L; within the complex interacts with VPS35L. Interacts with SNX17 (via C-terminus); the interaction is direct and associates SNX17 with the retriever complex. Interacts with SNX31; the interaction is direct. Ubiquitously expressed.

It localises to the endosome. Its function is as follows. Component of the commander complex that is essential for endosomal recycling of transmembrane cargos; the commander complex is composed of the CCC subcomplex and the retriever subcomplex. Component of the retriever complex, which is a heterotrimeric complex related to retromer cargo-selective complex (CSC) and essential for retromer-independent retrieval and recycling of numerous cargos such as integrin alpha-5/beta-1 (ITGA5:ITGB1). The recruitment of the retriever complex to the endosomal membrane involves CCC and WASH complexes. In the endosomes, drives the retriever and recycling of NxxY-motif-containing cargo proteins by coupling to SNX17, a cargo essential for the homeostatic maintenance of numerous cell surface proteins associated with processes that include cell migration, cell adhesion, nutrient supply and cell signaling. (Microbial infection) The heterotrimeric retriever complex, in collaboration with the CCC complex, mediates the exit of human papillomavirus to the cell surface. This chain is Vacuolar protein sorting-associated protein 26C, found in Homo sapiens (Human).